We begin with the raw amino-acid sequence, 382 residues long: Telomere-binding protein OPG082 (382 aa).

It belongs to the orthopoxvirus OPG082 family.

The protein localises to the virion. In terms of biological role, binds to the hairpin form of the viral telomeric sequence. Might direct genome encapsidation into the virus particle. This chain is Telomere-binding protein OPG082 (OPG082), found in Monkeypox virus.